Consider the following 215-residue polypeptide: Uracil-DNA glycosylase (215 aa).

The Proton acceptor role is filled by aspartate 59.

It belongs to the uracil-DNA glycosylase (UDG) superfamily. UNG family.

It localises to the cytoplasm. The catalysed reaction is Hydrolyzes single-stranded DNA or mismatched double-stranded DNA and polynucleotides, releasing free uracil.. Its function is as follows. Excises uracil residues from the DNA which can arise as a result of misincorporation of dUMP residues by DNA polymerase or due to deamination of cytosine. This Aliarcobacter butzleri (strain RM4018) (Arcobacter butzleri) protein is Uracil-DNA glycosylase.